The chain runs to 64 residues: Large ribosomal subunit protein bL35 (64 aa).

It belongs to the bacterial ribosomal protein bL35 family.

This chain is Large ribosomal subunit protein bL35, found in Vibrio campbellii (strain ATCC BAA-1116).